A 167-amino-acid polypeptide reads, in one-letter code: Probable D-lyxose ketol-isomerase (167 aa).

His-69, His-71, Glu-82, and His-137 together coordinate Mn(2+).

Belongs to the D-lyxose ketol-isomerase family. As to quaternary structure, homodimer. It depends on Mn(2+) as a cofactor.

The catalysed reaction is D-lyxose = D-xylulose. Sugar isomerase that catalyzes the reversible isomerization of D-lyxose to D-xylulose. The polypeptide is Probable D-lyxose ketol-isomerase (ydaE) (Bacillus subtilis (strain 168)).